Consider the following 414-residue polypeptide: Transcriptional repressor protein YY1 (414 aa).

Positions 1–170 (MASGDTLYIA…GGGSSSSGGG (170 aa)) are interaction with the SMAD1/SMAD4 complex. Residues 33–81 (VETIETTVVGEEEEEDDDDEDGGGGDHGGGGGHGHAGHHHHHHHHHHHP) are disordered. Residues 42–55 (GEEEEEDDDDEDGG) show a composition bias toward acidic residues. The span at 57 to 66 (GDHGGGGGHG) shows a compositional bias: gly residues. A compositionally biased stretch (basic residues) spans 67 to 81 (HAGHHHHHHHHHHHP). The interval 116 to 260 (DDSDGLRAED…YSEYMTGKKL (145 aa)) is gly-rich region involved in interaction with HCFC1. S118 bears the Phosphoserine; by CK2 mark. The segment at 157 to 203 (GKSGGGGSSSSGGGRVKKGGGKKSGKKSYLSGGAGAAGGGGADPGNK) is disordered. The segment covering 158 to 170 (KSGGGGSSSSGGG) has biased composition (gly residues). The segment covering 171–182 (RVKKGGGKKSGK) has biased composition (basic residues). Residues K182 and K183 each participate in a glycyl lysine isopeptide (Lys-Gly) (interchain with G-Cter in SUMO2) cross-link. The residue at position 187 (S187) is a Phosphoserine. Residues 188 to 199 (GGAGAAGGGGAD) show a composition bias toward gly residues. Glycyl lysine isopeptide (Lys-Gly) (interchain with G-Cter in SUMO2) cross-links involve residues K208 and K230. S247 carries the post-translational modification Phosphoserine. Residues 257–341 (GKKLPPGGIP…KAFVESSKLK (85 aa)) form an involved in nuclear matrix association region. Glycyl lysine isopeptide (Lys-Gly) (interchain with G-Cter in SUMO2) cross-links involve residues K286 and K288. The tract at residues 295–414 (TIACPHKGCT…LTHAKAKNNQ (120 aa)) is binding to DNA. 3 consecutive C2H2-type zinc fingers follow at residues 296–320 (IACPHKGCTKMFRDNSAMRKHLHTH), 325–347 (HVCAECGKAFVESSKLKRHQLVH), and 353–377 (FQCTFEGCGKRFSLDFNLRTHVRIH). Residues C298, C303, H316, H320, C327, C330, H343, H347, C355, C360, H373, and H377 each contribute to the Zn(2+) site. Residues 333 to 371 (AFVESSKLKRHQLVHTGEKPFQCTFEGCGKRFSLDFNLR) are involved in repression of activated transcription. The tract at residues 371-397 (RTHVRIHTGDRPYVCPFDGCNKKFAQS) is involved in masking transactivation domain. A Phosphothreonine modification is found at T378. The C2H2-type 4 zinc-finger motif lies at 383–407 (YVCPFDGCNKKFAQSTNLKSHILTH). Positions 385, 390, 403, and 407 each coordinate Zn(2+). Glycyl lysine isopeptide (Lys-Gly) (interchain with G-Cter in SUMO2) cross-links involve residues K409 and K411.

It belongs to the YY transcription factor family. As to quaternary structure, interacts with YAF2 through the region encompassing the first and second zinc fingers. Component of the chromatin remodeling INO80 complex; specifically part of a complex module associated with the DBINO domain of INO80. Interacts with EED and EZH2; the interactions are indicative for an association with the PRC2/EED-EZH2 complex. Interacts with SFMBT2. Found in a complex with SMAD1 and SMAD4. Found in a complex with YY1, SIN3A and HDAC1. Accessory component of the polycomb repressive deubiquitinase (PR-DUB) complex, at least composed of BAP1, one of ASXL1, ASXL2 or (probably) ASXL3 and one of MBD5 or MBD6; the PR-DUB core associates with a number of accessory proteins, including FOXK1, FOXK2, KDM1B, HCFC1, YY1 and OGT. Interacts (via Gly-rich region) with HCFC1; the interaction is direct. Interacts (via C-terminal zinc-finger domains) with BAP1 (via ULD domain); the interaction is direct and requires HCFC1. In terms of processing, phosphorylation at Ser-118 by CK2 prevents proteolytic cleavage by caspase-7 (CASP7) during apoptosis. Post-translationally, proteolytically cleaved by caspase-7 (CASP7) in response to apoptosis. Phosphorylation at Ser-118 protects against proteolytic cleavage. Transiently poly-ADP-ribosylated by PARP1 upon DNA damage, with the effect of decreasing affinity of YY1 to its cognate DNA binding sites. In terms of processing, ubiquitinated.

Its subcellular location is the nucleus matrix. In terms of biological role, multifunctional transcription factor that exhibits positive and negative control on a large number of cellular and viral genes by binding to sites overlapping the transcription start site. Binds to the consensus sequence 5'-CCGCCATNTT-3'; some genes have been shown to contain a longer binding motif allowing enhanced binding; the initial CG dinucleotide can be methylated greatly reducing the binding affinity. The effect on transcription regulation is depending upon the context in which it binds and diverse mechanisms of action include direct activation or repression, indirect activation or repression via cofactor recruitment, or activation or repression by disruption of binding sites or conformational DNA changes. Its activity is regulated by transcription factors and cytoplasmic proteins that have been shown to abrogate or completely inhibit YY1-mediated activation or repression. For example, it acts as a repressor in absence of adenovirus E1A protein but as an activator in its presence. Acts synergistically with the SMAD1 and SMAD4 in bone morphogenetic protein (BMP)-mediated cardiac-specific gene expression. Binds to SMAD binding elements (SBEs) (5'-GTCT/AGAC-3') within BMP response element (BMPRE) of cardiac activating regions. May play an important role in development and differentiation. Proposed to recruit the PRC2/EED-EZH2 complex to target genes that are transcriptional repressed. Involved in DNA repair. In vitro, binds to DNA recombination intermediate structures (Holliday junctions). Plays a role in regulating enhancer activation. Recruits the PR-DUB complex to specific gene-regulatory regions. Proposed core component of the chromatin remodeling INO80 complex which is involved in transcriptional regulation, DNA replication and probably DNA repair; proposed to target the INO80 complex to YY1-responsive elements. The chain is Transcriptional repressor protein YY1 (YY1) from Homo sapiens (Human).